We begin with the raw amino-acid sequence, 441 residues long: Methylenetetrahydrofolate--tRNA-(uracil-5-)-methyltransferase TrmFO (441 aa).

11–16 (GGGLAG) is a binding site for FAD.

Belongs to the MnmG family. TrmFO subfamily. It depends on FAD as a cofactor.

Its subcellular location is the cytoplasm. It catalyses the reaction uridine(54) in tRNA + (6R)-5,10-methylene-5,6,7,8-tetrahydrofolate + NADH + H(+) = 5-methyluridine(54) in tRNA + (6S)-5,6,7,8-tetrahydrofolate + NAD(+). It carries out the reaction uridine(54) in tRNA + (6R)-5,10-methylene-5,6,7,8-tetrahydrofolate + NADPH + H(+) = 5-methyluridine(54) in tRNA + (6S)-5,6,7,8-tetrahydrofolate + NADP(+). In terms of biological role, catalyzes the folate-dependent formation of 5-methyl-uridine at position 54 (M-5-U54) in all tRNAs. This chain is Methylenetetrahydrofolate--tRNA-(uracil-5-)-methyltransferase TrmFO, found in Syntrophus aciditrophicus (strain SB).